We begin with the raw amino-acid sequence, 503 residues long: MREANVYSEIVPHTVTAADIAAKRPAGIILSGGPSSVYEEGAPRLDEGIFELGVPVLGICYGFQVMAVALGGEVAKTGHREYGSTAVRVSAGARGGAGFLLDGQPGDQTVWMSHGDSVAKAPEGFDVLASTDDTPIAAFANDGRKLYGVQWHPEVKHSEHGQAVLENFLHRAAGIPADWNSGNVIADQVAAIRAQVGSGRVLCALSGGVDSAVAAALVHKAIGDQLVCVFVDHGLLRRDEARQVQEDYVSATGVRLITVDAEEQFLAALESVSDPEAKRKIIGREFIRVFERAQADLVAEAASEGDPIRFLVQGTLYPDVVESGGGAGTANIKSHHNVSGLPEDLQFELVEPLCTLFKDEVRAIGRELGLPEVIVGRQPFPGPGLGIRIVGDVTRERLDLLRDADAIVRAELTAAGLDSEIWQCPVVLLADVRSVGVQGDGRTYGHPIVLRPVSSEDAMTADWTRLPYHLLAKISNRITNEVEGVNRVVLDVTSKPPGTIEWE.

The region spanning Met-1–Asp-178 is the Glutamine amidotransferase type-1 domain. Cys-60 functions as the Nucleophile in the catalytic mechanism. Catalysis depends on residues His-152 and Glu-154. The region spanning Trp-179 to Arg-377 is the GMPS ATP-PPase domain. Residue Ser-206–Ala-212 participates in ATP binding.

Homodimer.

It catalyses the reaction XMP + L-glutamine + ATP + H2O = GMP + L-glutamate + AMP + diphosphate + 2 H(+). It participates in purine metabolism; GMP biosynthesis; GMP from XMP (L-Gln route): step 1/1. In terms of biological role, catalyzes the synthesis of GMP from XMP. In Leifsonia xyli subsp. xyli (strain CTCB07), this protein is GMP synthase [glutamine-hydrolyzing].